A 118-amino-acid polypeptide reads, in one-letter code: Large ribosomal subunit protein bL20 (118 aa).

This sequence belongs to the bacterial ribosomal protein bL20 family.

Binds directly to 23S ribosomal RNA and is necessary for the in vitro assembly process of the 50S ribosomal subunit. It is not involved in the protein synthesizing functions of that subunit. In Azotobacter vinelandii (strain DJ / ATCC BAA-1303), this protein is Large ribosomal subunit protein bL20.